We begin with the raw amino-acid sequence, 98 residues long: Large ribosomal subunit protein uL23 (98 aa).

This sequence belongs to the universal ribosomal protein uL23 family. Part of the 50S ribosomal subunit. Contacts protein L29, and trigger factor when it is bound to the ribosome.

Functionally, one of the early assembly proteins it binds 23S rRNA. One of the proteins that surrounds the polypeptide exit tunnel on the outside of the ribosome. Forms the main docking site for trigger factor binding to the ribosome. This is Large ribosomal subunit protein uL23 from Chromohalobacter salexigens (strain ATCC BAA-138 / DSM 3043 / CIP 106854 / NCIMB 13768 / 1H11).